The following is a 1934-amino-acid chain: Tudor domain-containing protein 15 (1934 aa).

Tudor domains follow at residues 59–117 (NVEI…LFEL), 289–347 (CDNF…FILV), 531–589 (KPEP…FCEL), 799–856 (PYEI…FLLL), 1011–1070 (DSNK…FPEL), and 1342–1401 (KPLV…FLTV). Positions 1490–1510 (VRPGDNEMKKGKSNESEGSMN) are disordered. Basic and acidic residues predominate over residues 1491–1504 (RPGDNEMKKGKSNE). 2 Tudor domains span residues 1574-1633 (SIEK…IRNI) and 1780-1838 (FIIP…PEEL).

In Homo sapiens (Human), this protein is Tudor domain-containing protein 15 (TDRD15).